The chain runs to 72 residues: Omega-conotoxin-like S6.6 (72 aa).

Residues 1-22 (MKLTCVVIVAVLLLTACQLLTA) form the signal peptide. A propeptide spanning residues 23–45 (DDSRGTQKHRALRSDTKLSMSTR) is cleaved from the precursor. 3 cysteine pairs are disulfide-bonded: Cys46–Cys61, Cys53–Cys65, and Cys60–Cys71. Cys71 carries the post-translational modification Cysteine amide.

Belongs to the conotoxin O1 superfamily. In terms of tissue distribution, expressed by the venom duct.

Its subcellular location is the secreted. Its function is as follows. Omega-conotoxins act at presynaptic membranes, they bind and block voltage-gated calcium channels (Cav). This toxin blocks N-, P- and Q-type calcium channels. This Conus striatus (Striated cone) protein is Omega-conotoxin-like S6.6.